Here is a 260-residue protein sequence, read N- to C-terminus: Pectate lyase H (260 aa).

The N-terminal stretch at 1 to 17 (MFIKNGLLLSLATSVLA) is a signal peptide.

It belongs to the polysaccharide lyase 3 family. Requires Ca(2+) as cofactor.

Its subcellular location is the secreted. It catalyses the reaction Eliminative cleavage of (1-&gt;4)-alpha-D-galacturonan to give oligosaccharides with 4-deoxy-alpha-D-galact-4-enuronosyl groups at their non-reducing ends.. Its function is as follows. Pectinolytic enzyme consist of four classes of enzymes: pectin lyase, polygalacturonase, pectin methylesterase and rhamnogalacturonase. Among pectinolytic enzymes, pectin lyase is the most important in depolymerization of pectin, since it cleaves internal glycosidic bonds of highly methylated pectins. Favors pectate, the anion, over pectin, the methyl ester. In Emericella nidulans (strain FGSC A4 / ATCC 38163 / CBS 112.46 / NRRL 194 / M139) (Aspergillus nidulans), this protein is Pectate lyase H (plyH).